The sequence spans 242 residues: HTH-type transcriptional regulator GadW (242 aa).

In terms of domain architecture, HTH araC/xylS-type spans 139-236 (GKVERLISFD…GVTPHQFAQH (98 aa)). 2 DNA-binding regions (H-T-H motif) span residues 156 to 177 (RDIA…QDEN) and 203 to 226 (LHTI…RQYY).

Homodimer.

Its function is as follows. Depending on the conditions (growth phase and medium), acts as a positive or negative regulator of gadA and gadBC. Repression occurs directly or via the repression of the expression of gadX. Activation occurs directly by the binding of GadW to the gadA and gadBC promoters. The chain is HTH-type transcriptional regulator GadW (gadW) from Escherichia coli (strain K12).